A 446-amino-acid polypeptide reads, in one-letter code: Glycerol-3-phosphate acyltransferase 3 (446 aa).

The next 3 helical transmembrane spans lie at 11–31 (IFIIWLTLVIVLILLPSMFGS), 146–166 (LRVTLIWVLGLCVRYCILLPL), and 168–188 (ITLATIGISWLVLGATLVGQL). Residues 236 to 241 (HTSPID) carry the HXXXXD motif motif.

The protein belongs to the 1-acyl-sn-glycerol-3-phosphate acyltransferase family.

It is found in the endoplasmic reticulum membrane. It catalyses the reaction sn-glycerol 3-phosphate + an acyl-CoA = a 1-acyl-sn-glycero-3-phosphate + CoA. The enzyme catalyses a 1-acyl-sn-glycero-3-phosphate + an acyl-CoA = a 1,2-diacyl-sn-glycero-3-phosphate + CoA. It carries out the reaction dodecanoyl-CoA + sn-glycerol 3-phosphate = 1-dodecanoyl-sn-glycerol 3-phosphate + CoA. The catalysed reaction is sn-glycerol 3-phosphate + hexadecanoyl-CoA = 1-hexadecanoyl-sn-glycero-3-phosphate + CoA. It catalyses the reaction sn-glycerol 3-phosphate + (9Z)-octadecenoyl-CoA = 1-(9Z-octadecenoyl)-sn-glycero-3-phosphate + CoA. The enzyme catalyses (9Z,12Z)-octadecadienoyl-CoA + sn-glycerol 3-phosphate = 1-(9Z,12Z)-octadecadienoyl-sn-glycero-3-phosphate + CoA. It carries out the reaction 1-tetradecanoyl-sn-glycerol 3-phosphate + (9Z)-octadecenoyl-CoA = 1-tetradecanoyl-2-(9Z)-octadecenoyl-sn-glycero-3-phosphate + CoA. The catalysed reaction is 1-hexadecanoyl-sn-glycero-3-phosphate + (9Z)-octadecenoyl-CoA = 1-hexadecanoyl-2-(9Z-octadecenoyl)-sn-glycero-3-phosphate + CoA. It catalyses the reaction 1-(9Z-octadecenoyl)-sn-glycero-3-phosphate + (9Z)-octadecenoyl-CoA = 1,2-di-(9Z-octadecenoyl)-sn-glycero-3-phosphate + CoA. The enzyme catalyses 1-(6Z,9Z,12Z-octadecatrienoyl)-sn-glycero-3-phosphate + (9Z)-octadecenoyl-CoA = (6Z,9Z,12Z)-octadecatrienoyl-2-(9Z)-octadecenoyl-sn-glycero-3-phosphate + CoA. It carries out the reaction 1-(9Z,12Z,15Z)-octadecatrienoyl-sn-glycero-3-phosphate + (9Z)-octadecenoyl-CoA = 1-(9Z,12Z,15Z)-octadecatrienoyl-2-(9Z)-octadecenoyl-sn-glycero-3-phosphate + CoA. The catalysed reaction is 1-(9Z-octadecenoyl)-sn-glycero-3-phosphate + tetradecanoyl-CoA = 1-(9Z)-octadecenoyl-2-tetradecanoyl-sn-glycero-3-phosphate + CoA. It catalyses the reaction 1-(9Z-octadecenoyl)-sn-glycero-3-phosphate + hexadecanoyl-CoA = 1-(9Z)-octadecenoyl-2-hexadecanoyl-sn-glycero-3-phosphate + CoA. The enzyme catalyses 1-(9Z-octadecenoyl)-sn-glycero-3-phosphate + octadecanoyl-CoA = 1-(9Z-octadecenoyl)-2-octadecanoyl-sn-glycero-3-phosphate + CoA. It carries out the reaction 1-(9Z-octadecenoyl)-sn-glycero-3-phosphate + (9Z,12Z)-octadecadienoyl-CoA = 1-(9Z)-octadecenoyl-2-(9Z,12Z)-octadecadienoyl-sn-glycero-3-phosphate + CoA. The catalysed reaction is 1-(5Z,8Z,11Z,14Z-eicosatetraenoyl)-sn-glycero-3-phosphate + (9Z)-octadecenoyl-CoA = 1-(5Z,8Z,11Z,14Z)-eicosatetraenoyl-2-(9Z)-octadecenoyl-sn-glycero-3-phosphate + CoA. It participates in glycerolipid metabolism; triacylglycerol biosynthesis. Its pathway is phospholipid metabolism; CDP-diacylglycerol biosynthesis; CDP-diacylglycerol from sn-glycerol 3-phosphate: step 1/3. Its function is as follows. Converts glycerol-3-phosphate to 1-acyl-sn-glycerol-3-phosphate (lysophosphatidic acid or LPA) by incorporating an acyl moiety at the sn-1 position of the glycerol backbone. Also converts LPA into 1,2-diacyl-sn-glycerol-3-phosphate (phosphatidic acid or PA) by incorporating an acyl moiety at the sn-2 position of the glycerol backbone. Protects cells against lipotoxicity. The polypeptide is Glycerol-3-phosphate acyltransferase 3 (Xenopus laevis (African clawed frog)).